The following is a 294-amino-acid chain: tRNA dimethylallyltransferase (294 aa).

10-17 (GPTAVGKT) provides a ligand contact to ATP. 12-17 (TAVGKT) is a binding site for substrate. The segment at 35 to 38 (DSQQ) is interaction with substrate tRNA.

This sequence belongs to the IPP transferase family. Monomer. Mg(2+) is required as a cofactor.

It carries out the reaction adenosine(37) in tRNA + dimethylallyl diphosphate = N(6)-dimethylallyladenosine(37) in tRNA + diphosphate. In terms of biological role, catalyzes the transfer of a dimethylallyl group onto the adenine at position 37 in tRNAs that read codons beginning with uridine, leading to the formation of N6-(dimethylallyl)adenosine (i(6)A). The protein is tRNA dimethylallyltransferase of Streptococcus suis (strain 05ZYH33).